We begin with the raw amino-acid sequence, 529 residues long: Protein PNS1 (529 aa).

The tract at residues 1-58 (MSQQYSYGGGGGAGYPPPQMQPPNSYAQANYQGQPQGAQNQYYNGQQPHHNAPQQYYG) is disordered. Topologically, residues 1-84 (MSQQYSYGGG…LQPKPKFRDP (84 aa)) are cytoplasmic. Over residues 22–48 (PPNSYAQANYQGQPQGAQNQYYNGQQP) the composition is skewed to low complexity. The helical transmembrane segment at 85-105 (IFLVLFLLVFAGFIALSVICL) threads the bilayer. The Extracellular portion of the chain corresponds to 106–132 (RSYSNADVNVSIGRANVAGSTLNGHTA). An N-linked (GlcNAc...) asparagine glycan is attached at N114. A helical transmembrane segment spans residues 133 to 153 (IMFMICCAVALVLSFVYILLV). The Cytoplasmic segment spans residues 154–158 (RTFPK). The helical transmembrane segment at 159–179 (IILEATLLLTTLSNVAFCVYL) threads the bilayer. At 180–184 (WVRGN) the chain is on the extracellular side. The chain crosses the membrane as a helical span at residues 185–205 (TAAAIIFTIFAVLSVIAYFFM). Residues 206 to 230 (RKRIPLAKLILVTVIRTAEQYKSVY) lie on the Cytoplasmic side of the membrane. The helical transmembrane segment at 231 to 251 (VVALGGLIVETAFSAWTSWVV) threads the bilayer. At 252 to 271 (VAAYQRFEPSGQAAGSSSSN) the chain is on the extracellular side. The N-linked (GlcNAc...) asparagine glycan is linked to N271. The chain crosses the membrane as a helical span at residues 272–292 (ASIIGIMVFIVFAYYWISEVI). Residues 293–294 (KN) lie on the Cytoplasmic side of the membrane. The chain crosses the membrane as a helical span at residues 295–315 (IAFTTVAGIFGVAYYNANKVA). At 316–325 (NAAWGAFRRS) the chain is on the extracellular side. A helical membrane pass occupies residues 326–346 (MTYSLGSICFGSLIVAILDLL). At 347–362 (RALFNILQSQAASDGD) the chain is on the cytoplasmic side. The helical transmembrane segment at 363–383 (MTGQILACVAGCCVSCIQGLV) threads the bilayer. Residues 384–427 (DYFNRYAYINIALYGNGYITAAKETWALLKDRGIDAIINDSLVN) are Extracellular-facing. A glycan (N-linked (GlcNAc...) asparagine) is linked at N422. Residues 428 to 448 (IVFNCGAFIIGLLTALFAFIY) traverse the membrane as a helical segment. The Cytoplasmic segment spans residues 449–464 (EQLTNPRYLQNDAGYY). The chain crosses the membrane as a helical span at residues 465–485 (SIVLLVAFGLGFNIALSVGAG). At 486-529 (SIASGVSTYFVALAEDPYILQGKNPELFEMIRQQYPQVVQGVNH) the chain is on the extracellular side.

This sequence belongs to the CTL (choline transporter-like) family.

The protein resides in the cell membrane. In terms of biological role, probably involved in transport through the plasma membrane. The chain is Protein PNS1 (PNS1) from Mycosarcoma maydis (Corn smut fungus).